Reading from the N-terminus, the 736-residue chain is 3',5'-cyclic-AMP phosphodiesterase 4B (736 aa).

3 disordered regions span residues 51-78 (QLPPLSQRQSERARTPEGDGISRPTTLP), 189-209 (LHGTSNKRSPAASQPPVSRVN), and 282-301 (KQNDVEIPSPTQKDREKKKK). S290 is subject to Phosphoserine. The region spanning 330 to 659 (VNTENEDHLA…NWYQSMIPQS (330 aa)) is the PDEase domain. H406 (proton donor) is an active-site residue. H406 serves as a coordination point for 3',5'-cyclic AMP. AMP contacts are provided by H406 and H410. The Zn(2+) site is built by H410, H446, D447, and D564. The AMP site is built by D447, D564, Q615, and F618. D447 contributes to the Mg(2+) binding site. D447 is a Mn(2+) binding site. 2 residues coordinate 3',5'-cyclic AMP: Q615 and F618. S659 and S661 each carry phosphoserine. The interval 685–736 (DEEDSEGPEKEGEGHSYFSSTKTLCVIDPENRDSLGETDIDIATEDKSPVDT) is disordered.

The protein belongs to the cyclic nucleotide phosphodiesterase family. PDE4 subfamily. In terms of assembly, interacts with DISC1. The cofactor is Zn(2+). It depends on Mg(2+) as a cofactor. Requires Mn(2+) as cofactor. As to expression, expressed in brain, heart, lung and skeletal muscle. Expressed in white blood cells. In terms of tissue distribution, brain-specific isoform.

It is found in the cytoplasm. The protein localises to the cell membrane. It catalyses the reaction 3',5'-cyclic AMP + H2O = AMP + H(+). It functions in the pathway purine metabolism; 3',5'-cyclic AMP degradation; AMP from 3',5'-cyclic AMP: step 1/1. With respect to regulation, inhibited by rolipram. Its function is as follows. Hydrolyzes the second messenger cAMP, which is a key regulator of many important physiological processes. May be involved in mediating central nervous system effects of therapeutic agents ranging from antidepressants to antiasthmatic and anti-inflammatory agents. In Homo sapiens (Human), this protein is 3',5'-cyclic-AMP phosphodiesterase 4B.